The following is a 631-amino-acid chain: Phosphomethylpyrimidine synthase (631 aa).

Substrate-binding positions include Asn-239, Met-268, Tyr-297, His-333, 353–355 (SRG), 394–397 (DGLR), and Glu-433. Residue His-437 participates in Zn(2+) binding. Tyr-460 is a binding site for substrate. Position 501 (His-501) interacts with Zn(2+). [4Fe-4S] cluster contacts are provided by Cys-581, Cys-584, and Cys-589.

The protein belongs to the ThiC family. As to quaternary structure, homodimer. [4Fe-4S] cluster is required as a cofactor.

It carries out the reaction 5-amino-1-(5-phospho-beta-D-ribosyl)imidazole + S-adenosyl-L-methionine = 4-amino-2-methyl-5-(phosphooxymethyl)pyrimidine + CO + 5'-deoxyadenosine + formate + L-methionine + 3 H(+). The protein operates within cofactor biosynthesis; thiamine diphosphate biosynthesis. Its function is as follows. Catalyzes the synthesis of the hydroxymethylpyrimidine phosphate (HMP-P) moiety of thiamine from aminoimidazole ribotide (AIR) in a radical S-adenosyl-L-methionine (SAM)-dependent reaction. The chain is Phosphomethylpyrimidine synthase from Escherichia coli O45:K1 (strain S88 / ExPEC).